We begin with the raw amino-acid sequence, 617 residues long: Hemagglutinin glycoprotein (617 aa).

Topologically, residues 1 to 37 (MSPQRDRINAFYKDNPHPKGSRIVINREHLMIDRPYV) are intravirion. The interval 1–154 (MSPQRDRINA…RIKLDYDQYC (154 aa)) is stalk. The chain crosses the membrane as a helical; Signal-anchor for type II membrane protein span at residues 38 to 58 (LLAVLFVMFLSLIGLLAIAGI). The Virion surface portion of the chain corresponds to 59 to 617 (RLHRAAIYTA…VTREDGTNRR (559 aa)). 5 N-linked (GlcNAc...) asparagine; by host glycosylation sites follow: Asn-168, Asn-187, Asn-200, Asn-215, and Asn-238. 5 disulfide bridges follow: Cys-188/Cys-606, Cys-287/Cys-300, Cys-381/Cys-494, Cys-386/Cys-394, and Cys-570/Cys-579. Residues 458–543 (PMKNLALGVI…VEHAVVYYVY (86 aa)) are interaction with host NECTIN4 receptor.

This sequence belongs to the paramyxoviruses hemagglutinin-neuraminidase family. Non-sialidase subfamily. As to quaternary structure, homodimer; disulfide-linked. Further forms homotetramer (dimer of dimers). Interacts (via C-terminus) with human NECTIN4 (via N-terminus); this interaction allows attachment to the respiratory epithelium and viral entry. Interacts (via C-terminus) with human SLAMF1/CD150 (via N-terminus); this interaction allows attachment and viral entry into the CD150-expressing immune cells. Interacts with human CD46 antigen (via N-terminus); this interaction allows attachment and viral entry of vaccine and laboratory-adapted strains.

It is found in the virion membrane. Its subcellular location is the host cell membrane. Its function is as follows. Attaches the virus to the human SLAMF1/CD150 receptor for entry into host dendritic cells, macrophages, activated memory T cells and naive or memory B cells, thereby explaining the long immunosuppression that follows infection. In the respiratory airways, binds to the NECTIN4 receptor for entry into the host cell. Binding of H protein to the receptor induces a conformational change that allows the F protein to trigger virion/cell membranes fusion. The vaccine and laboratory-adapted strains use host CD46 as an alternate receptor. The high degree of interaction between H and CD46 results in down-regulation of the latter from the surface of infected cells, rendering them more sensitive to c3b-mediated complement lysis. This is Hemagglutinin glycoprotein (H) from Measles virus (strain Edmonston) (MeV).